The sequence spans 213 residues: Ripening-related protein 3 (213 aa).

A signal peptide spans 1-32; that stretch reads MAGAMTMSRRRLSHALLLVLAILPNLAALAVA.

The protein belongs to the kiwellin family.

It localises to the secreted. The sequence is that of Ripening-related protein 3 from Oryza sativa subsp. japonica (Rice).